The following is a 261-amino-acid chain: Fructoselysine 6-kinase (261 aa).

Belongs to the carbohydrate kinase PfkB family. Monomer.

It catalyses the reaction N(6)-(D-fructosyl)-L-lysine + ATP = N(6)-(6-phospho-D-fructosyl)-L-lysine + ADP + H(+). It functions in the pathway carbohydrate metabolism; fructoselysine degradation; D-glucose 6-phosphate and lysine from fructoselysine: step 1/2. Its function is as follows. Catalyzes the ATP-dependent phosphorylation of fructoselysine to fructoselysine 6-phosphate. May function in a fructoselysine degradation pathway that allows S.flexneri to grow on fructoselysine or psicoselysine. The protein is Fructoselysine 6-kinase (frlD) of Shigella flexneri.